The sequence spans 348 residues: Oxygen-dependent coproporphyrinogen-III oxidase (348 aa).

Substrate is bound at residue Ser-104. 2 residues coordinate a divalent metal cation: His-108 and His-118. The active-site Proton donor is the His-118. Residue 120–122 (NYR) participates in substrate binding. Positions 152 and 182 each coordinate a divalent metal cation. The tract at residues 272–307 (YAEFNLVWDRGTIFGLQTNGRTESILMSLPPLARWE) is important for dimerization.

It belongs to the aerobic coproporphyrinogen-III oxidase family. Homodimer. A divalent metal cation serves as cofactor.

The protein resides in the cytoplasm. It catalyses the reaction coproporphyrinogen III + O2 + 2 H(+) = protoporphyrinogen IX + 2 CO2 + 2 H2O. The protein operates within porphyrin-containing compound metabolism; protoporphyrin-IX biosynthesis; protoporphyrinogen-IX from coproporphyrinogen-III (O2 route): step 1/1. Functionally, involved in the heme and chlorophyll biosynthesis. Catalyzes the aerobic oxidative decarboxylation of propionate groups of rings A and B of coproporphyrinogen-III to yield the vinyl groups in protoporphyrinogen-IX. This chain is Oxygen-dependent coproporphyrinogen-III oxidase, found in Prochlorococcus marinus (strain NATL1A).